The following is a 313-amino-acid chain: Methylenetetrahydrofolate dehydrogenase [NAD(+)] (313 aa).

Cys152 is an active-site residue. Residues Arg187–Ser188, Asp210–Ile211, and Phe270–Gly272 each bind NAD(+).

It belongs to the tetrahydrofolate dehydrogenase/cyclohydrolase family. In terms of assembly, homodimer.

It catalyses the reaction (6R)-5,10-methylene-5,6,7,8-tetrahydrofolate + NAD(+) = (6R)-5,10-methenyltetrahydrofolate + NADH. It participates in one-carbon metabolism; tetrahydrofolate interconversion. Functionally, catalyzes oxidation of cytoplasmic one-carbon units for purine biosynthesis. The polypeptide is Methylenetetrahydrofolate dehydrogenase [NAD(+)] (thfA) (Dictyostelium discoideum (Social amoeba)).